Reading from the N-terminus, the 378-residue chain is UDP-N-acetylglucosamine--N-acetylmuramyl-(pentapeptide) pyrophosphoryl-undecaprenol N-acetylglucosamine transferase (378 aa).

UDP-N-acetyl-alpha-D-glucosamine contacts are provided by residues 14–16 (TGG), Asn125, Arg165, Ser193, and Gln293.

Belongs to the glycosyltransferase 28 family. MurG subfamily.

It is found in the cell inner membrane. It carries out the reaction di-trans,octa-cis-undecaprenyl diphospho-N-acetyl-alpha-D-muramoyl-L-alanyl-D-glutamyl-meso-2,6-diaminopimeloyl-D-alanyl-D-alanine + UDP-N-acetyl-alpha-D-glucosamine = di-trans,octa-cis-undecaprenyl diphospho-[N-acetyl-alpha-D-glucosaminyl-(1-&gt;4)]-N-acetyl-alpha-D-muramoyl-L-alanyl-D-glutamyl-meso-2,6-diaminopimeloyl-D-alanyl-D-alanine + UDP + H(+). The protein operates within cell wall biogenesis; peptidoglycan biosynthesis. Functionally, cell wall formation. Catalyzes the transfer of a GlcNAc subunit on undecaprenyl-pyrophosphoryl-MurNAc-pentapeptide (lipid intermediate I) to form undecaprenyl-pyrophosphoryl-MurNAc-(pentapeptide)GlcNAc (lipid intermediate II). In Bartonella henselae (strain ATCC 49882 / DSM 28221 / CCUG 30454 / Houston 1) (Rochalimaea henselae), this protein is UDP-N-acetylglucosamine--N-acetylmuramyl-(pentapeptide) pyrophosphoryl-undecaprenol N-acetylglucosamine transferase.